We begin with the raw amino-acid sequence, 145 residues long: 3-dehydroquinate dehydratase (145 aa).

Catalysis depends on Tyr-24, which acts as the Proton acceptor. Asn-76, His-82, and Asp-89 together coordinate substrate. His-102 serves as the catalytic Proton donor. Residues 103-104 and Arg-113 contribute to the substrate site; that span reads VS.

The protein belongs to the type-II 3-dehydroquinase family. In terms of assembly, homododecamer.

It carries out the reaction 3-dehydroquinate = 3-dehydroshikimate + H2O. It functions in the pathway metabolic intermediate biosynthesis; chorismate biosynthesis; chorismate from D-erythrose 4-phosphate and phosphoenolpyruvate: step 3/7. Catalyzes a trans-dehydration via an enolate intermediate. The polypeptide is 3-dehydroquinate dehydratase (Herminiimonas arsenicoxydans).